We begin with the raw amino-acid sequence, 209 residues long: Holliday junction branch migration complex subunit RuvA (209 aa).

The tract at residues 1-70 (MFSYLKGEAI…EDGTYLYGFA (70 aa)) is domain I. Residues 71 to 149 (SAAARDLFRQ…QWRDQFSLPD (79 aa)) are domain II. Residues 149–153 (DTAAQ) are flexible linker. A domain III region spans residues 154–209 (PNAAVHEDLELTLLALGYQETEIRGAIATLSQDSILLQNDNADEWIRRAITLLSQT).

It belongs to the RuvA family. In terms of assembly, homotetramer. Forms an RuvA(8)-RuvB(12)-Holliday junction (HJ) complex. HJ DNA is sandwiched between 2 RuvA tetramers; dsDNA enters through RuvA and exits via RuvB. An RuvB hexamer assembles on each DNA strand where it exits the tetramer. Each RuvB hexamer is contacted by two RuvA subunits (via domain III) on 2 adjacent RuvB subunits; this complex drives branch migration. In the full resolvosome a probable DNA-RuvA(4)-RuvB(12)-RuvC(2) complex forms which resolves the HJ.

The protein resides in the cytoplasm. The RuvA-RuvB-RuvC complex processes Holliday junction (HJ) DNA during genetic recombination and DNA repair, while the RuvA-RuvB complex plays an important role in the rescue of blocked DNA replication forks via replication fork reversal (RFR). RuvA specifically binds to HJ cruciform DNA, conferring on it an open structure. The RuvB hexamer acts as an ATP-dependent pump, pulling dsDNA into and through the RuvAB complex. HJ branch migration allows RuvC to scan DNA until it finds its consensus sequence, where it cleaves and resolves the cruciform DNA. The sequence is that of Holliday junction branch migration complex subunit RuvA from Picosynechococcus sp. (strain ATCC 27264 / PCC 7002 / PR-6) (Agmenellum quadruplicatum).